Here is a 610-residue protein sequence, read N- to C-terminus: MDTPRGIGTFVVWDYVVFAGMLVISAAIGIYYAFAGGGQQTSKDFLMGGRRMTAVPVALSLTASFMSAVTVLGTPSEVYRFGAIFSIFAFTYFFVVVISAEVFLPVFYKLGITSTYEYLELRFNKCVRLCGTVLFIVQTILYTGIVIYAPALALNQVTGFDLWGAVVATGVVCTFYCTLGGLKAVIWTDVFQVGIMVAGFASVIIQAVVMQGGISTILNDAYDGGRLNFWNFNPNPLQRHTFWTIIIGGTFTWTSIYGVNQSQVQRYISCKSRFQAKLSLYINLVGLWAILTCSVFCGLALYSRYHDCDPWTAKKVSAPDQLMPYLVLDILQDYPGLPGLFVACAYSGTLSTVSSSINALAAVTVEDLIKPYFRSLSERSLSWISQGMSVVYGALCIGMAALASLMGALLQAALSVFGMVGGPLMGLFALGILVPFANSIGALVGLMAGFAISLWVGIGAQIYPPLPERTLPLHLDIQGCNSTYNETNLMTTTEMPFTTSVFQIYNVQRTPLMDNWYSLSYLYFSTVGTLVTLLVGILVSLSTGGRKQNLDPRYILTKEDFLSNFDIFKKKKHVLSYKSHPVEDGGTDNPAFNHIELNSDQSGKSNGTRL.

Topologically, residues 1–9 are extracellular; the sequence is MDTPRGIGT. A helical transmembrane segment spans residues 10 to 30; that stretch reads FVVWDYVVFAGMLVISAAIGI. Residues 31 to 51 are Cytoplasmic-facing; it reads YYAFAGGGQQTSKDFLMGGRR. Residues 52–72 form a helical membrane-spanning segment; the sequence is MTAVPVALSLTASFMSAVTVL. Topologically, residues 73–83 are extracellular; it reads GTPSEVYRFGA. The chain crosses the membrane as a helical span at residues 84-104; it reads IFSIFAFTYFFVVVISAEVFL. Residues 105 to 132 lie on the Cytoplasmic side of the membrane; sequence PVFYKLGITSTYEYLELRFNKCVRLCGT. Residues 133–153 form a helical membrane-spanning segment; the sequence is VLFIVQTILYTGIVIYAPALA. Residues 154 to 161 are Extracellular-facing; that stretch reads LNQVTGFD. The helical transmembrane segment at 162 to 182 threads the bilayer; that stretch reads LWGAVVATGVVCTFYCTLGGL. Residues 183 to 189 are Cytoplasmic-facing; that stretch reads KAVIWTD. A helical transmembrane segment spans residues 190 to 210; the sequence is VFQVGIMVAGFASVIIQAVVM. The Extracellular portion of the chain corresponds to 211-239; it reads QGGISTILNDAYDGGRLNFWNFNPNPLQR. A helical membrane pass occupies residues 240–260; that stretch reads HTFWTIIIGGTFTWTSIYGVN. The Cytoplasmic portion of the chain corresponds to 261 to 279; the sequence is QSQVQRYISCKSRFQAKLS. The helical transmembrane segment at 280–300 threads the bilayer; sequence LYINLVGLWAILTCSVFCGLA. Topologically, residues 301 to 336 are extracellular; sequence LYSRYHDCDPWTAKKVSAPDQLMPYLVLDILQDYPG. A helical transmembrane segment spans residues 337-359; that stretch reads LPGLFVACAYSGTLSTVSSSINA. Residues 360-389 are Cytoplasmic-facing; the sequence is LAAVTVEDLIKPYFRSLSERSLSWISQGMS. A helical membrane pass occupies residues 390 to 410; that stretch reads VVYGALCIGMAALASLMGALL. At 411-415 the chain is on the extracellular side; that stretch reads QAALS. Residues 416 to 436 traverse the membrane as a helical segment; sequence VFGMVGGPLMGLFALGILVPF. Residues 437 to 439 lie on the Cytoplasmic side of the membrane; sequence ANS. The helical transmembrane segment at 440–460 threads the bilayer; sequence IGALVGLMAGFAISLWVGIGA. Residues 461–518 lie on the Extracellular side of the membrane; sequence QIYPPLPERTLPLHLDIQGCNSTYNETNLMTTTEMPFTTSVFQIYNVQRTPLMDNWYS. The N-linked (GlcNAc...) asparagine glycan is linked to Asn-485. A helical transmembrane segment spans residues 519 to 539; that stretch reads LSYLYFSTVGTLVTLLVGILV. Topologically, residues 540-610 are cytoplasmic; sequence SLSTGGRKQN…QSGKSNGTRL (71 aa). The interval 585-610 is disordered; sequence GGTDNPAFNHIELNSDQSGKSNGTRL. Residues 596–610 show a composition bias toward polar residues; sequence ELNSDQSGKSNGTRL. A PDZ-binding motif is present at residues 608–610; it reads TRL.

It belongs to the sodium:solute symporter (SSF) (TC 2.A.21) family. Interacts (via PDZ-binding motif) with PDZK1 (via PDZ domains 1 and 3); interaction increases nicotinate transport activity of SLC5A8. As to expression, expressed in normal thyroid, localized at the apical pole of thyroid cells facing the colloid lumen, but expression profoundly decreased in thyroid carcinomas. Expressed in normal colon but absent in colon aberrant crypt foci and colon cancers. Present in normal kidney cortex, brain, prostate, gastric mucosa and breast tissue but was significantly down-regulated in primary gliomas, gastric cancer, prostate tumors and breast tumors.

Its subcellular location is the apical cell membrane. The catalysed reaction is (S)-lactate(out) + 2 Na(+)(out) = (S)-lactate(in) + 2 Na(+)(in). The enzyme catalyses propanoate(out) + 2 Na(+)(out) = propanoate(in) + 2 Na(+)(in). It carries out the reaction pyruvate(out) + 2 Na(+)(out) = pyruvate(in) + 2 Na(+)(in). It catalyses the reaction acetate(out) + 2 Na(+)(out) = acetate(in) + 2 Na(+)(in). The catalysed reaction is butanoate(out) + 2 Na(+)(out) = butanoate(in) + 2 Na(+)(in). The enzyme catalyses nicotinate(out) + 2 Na(+)(out) = nicotinate(in) + 2 Na(+)(in). It carries out the reaction (R)-3-hydroxybutanoate(out) + 2 Na(+)(out) = (R)-3-hydroxybutanoate(in) + 2 Na(+)(in). It catalyses the reaction acetoacetate(out) + 2 Na(+)(out) = acetoacetate(in) + 2 Na(+)(in). The catalysed reaction is 4-methyl-2-oxopentanoate(out) + 2 Na(+)(out) = 4-methyl-2-oxopentanoate(in) + 2 Na(+)(in). The enzyme catalyses 5-oxo-L-proline(out) + 2 Na(+)(out) = 5-oxo-L-proline(in) + 2 Na(+)(in). It carries out the reaction iodide(out) = iodide(in). It catalyses the reaction chloride(in) = chloride(out). The catalysed reaction is nitrate(in) = nitrate(out). The enzyme catalyses bromide(in) = bromide(out). Increase of iodide influx inhibited by addition of perchlorate (NaClO(4)), a competitive inhibitor of iodide uptake catalyzed by sodium iodide symporter (NIS). Cotransport of monocarboxylates and nicotinate strongly inhibited by probenecid, nonsteroid anti-inflammatory drugs (ibuprofen, fenoprofen, ketprofen, naproxen) in a Na(+)-dependent manner or by prolonged exposure to external concentrations of monocarboxylates. Functionally, acts as an electrogenic sodium (Na(+)) and chloride (Cl-)-dependent sodium-coupled solute transporter, including transport of monocarboxylates (short-chain fatty acids including L-lactate, D-lactate, pyruvate, acetate, propionate, valerate and butyrate), mocarboxylate drugs (nicotinate, benzoate, salicylate and 5-aminosalicylate) and ketone bodies (beta-D-hydroxybutyrate, acetoacetate and alpha-ketoisocaproate), with a Na(+):substrate stoichiometry of between 4:1 and 2:1. Catalyzes passive carrier mediated diffusion of iodide. Mediates iodide transport from the thyrocyte into the colloid lumen through the apical membrane. May be responsible for the absorption of D-lactate and monocarboxylate drugs from the intestinal tract. Acts as a tumor suppressor, suppressing colony formation in colon cancer, prostate cancer and glioma cell lines. May play a critical role in the entry of L-lactate and ketone bodies into neurons by a process driven by an electrochemical Na(+) gradient and hence contribute to the maintenance of the energy status and function of neurons. Mediates sodium-coupled electrogenic transport of pyroglutamate (5-oxo-L-proline). Can mediate the transport of chloride, bromide, iodide and nitrate ions when the external concentration of sodium ions is reduced. The sequence is that of Sodium-coupled monocarboxylate transporter 1 from Homo sapiens (Human).